We begin with the raw amino-acid sequence, 304 residues long: Aspartate carbamoyltransferase catalytic subunit (304 aa).

Carbamoyl phosphate is bound by residues Arg57 and Thr58. Lys86 contacts L-aspartate. 3 residues coordinate carbamoyl phosphate: Arg107, His135, and Gln138. Positions 168 and 229 each coordinate L-aspartate. Residues Leu266 and Pro267 each contribute to the carbamoyl phosphate site.

Belongs to the aspartate/ornithine carbamoyltransferase superfamily. ATCase family. As to quaternary structure, heterooligomer of catalytic and regulatory chains.

The catalysed reaction is carbamoyl phosphate + L-aspartate = N-carbamoyl-L-aspartate + phosphate + H(+). It functions in the pathway pyrimidine metabolism; UMP biosynthesis via de novo pathway; (S)-dihydroorotate from bicarbonate: step 2/3. In terms of biological role, catalyzes the condensation of carbamoyl phosphate and aspartate to form carbamoyl aspartate and inorganic phosphate, the committed step in the de novo pyrimidine nucleotide biosynthesis pathway. The chain is Aspartate carbamoyltransferase catalytic subunit from Methanosphaera stadtmanae (strain ATCC 43021 / DSM 3091 / JCM 11832 / MCB-3).